A 193-amino-acid polypeptide reads, in one-letter code: Translocation protein SEC72 (193 aa).

As to quaternary structure, component of the heterotetrameric Sec62/63complex composed of SEC62, SEC63, SEC71 and SEC72. The Sec62/63 complex associates with the Sec61 complex to form the Sec complex. May interact with protein YLR301W. Part of a complex consisting of KAR2, SEC63, SEC66 and SEC72.

The protein resides in the cytoplasm. Its function is as follows. Acts as a non-essential component of the Sec62/63 complex which is involved in SRP-independent post-translational translocation across the endoplasmic reticulum (ER) and functions together with the Sec61 complex and KAR2 in a channel-forming translocon complex. A cycle of assembly and disassembly of Sec62/63 complex from SEC61 may govern the activity of the translocon. SEC72 may be involved in signal peptide recognition for a defined subset of leader peptides, or may increase the efficiency of unusual or 'difficult' secretory precursors to the translocation pore, it may be that this protein binds charged leader peptides to the membrane until they engage the translocation apparatus. This Saccharomyces cerevisiae (strain ATCC 204508 / S288c) (Baker's yeast) protein is Translocation protein SEC72 (SEC72).